A 275-amino-acid polypeptide reads, in one-letter code: NAD kinase (275 aa).

The Proton acceptor role is filled by Asp-53. Residues 53 to 54 (DG), 129 to 130 (NE), Arg-155, Asp-157, and 168 to 173 (TAYNKS) each bind NAD(+).

Belongs to the NAD kinase family. A divalent metal cation is required as a cofactor.

The protein resides in the cytoplasm. It carries out the reaction NAD(+) + ATP = ADP + NADP(+) + H(+). Involved in the regulation of the intracellular balance of NAD and NADP, and is a key enzyme in the biosynthesis of NADP. Catalyzes specifically the phosphorylation on 2'-hydroxyl of the adenosine moiety of NAD to yield NADP. The protein is NAD kinase of Streptococcus agalactiae serotype Ia (strain ATCC 27591 / A909 / CDC SS700).